The chain runs to 202 residues: Ribosome maturation factor RimM (202 aa).

Positions 121–202 constitute a PRC barrel domain; the sequence is KDEYYWVDLI…CITVDWQPDY (82 aa).

This sequence belongs to the RimM family. As to quaternary structure, binds ribosomal protein uS19.

The protein resides in the cytoplasm. In terms of biological role, an accessory protein needed during the final step in the assembly of 30S ribosomal subunit, possibly for assembly of the head region. Essential for efficient processing of 16S rRNA. May be needed both before and after RbfA during the maturation of 16S rRNA. It has affinity for free ribosomal 30S subunits but not for 70S ribosomes. This chain is Ribosome maturation factor RimM, found in Polaromonas sp. (strain JS666 / ATCC BAA-500).